A 449-amino-acid chain; its full sequence is Signal recognition particle protein (449 aa).

GTP is bound by residues 109–116 (GLQGSGKT), 191–195 (DTAGR), and 249–252 (SRID).

Belongs to the GTP-binding SRP family. SRP54 subfamily. Part of the signal recognition particle protein translocation system, which is composed of SRP and FtsY. SRP is a ribonucleoprotein composed of Ffh and a 4.5S RNA molecule.

The protein localises to the cytoplasm. It carries out the reaction GTP + H2O = GDP + phosphate + H(+). Functionally, involved in targeting and insertion of nascent membrane proteins into the cytoplasmic membrane. Binds to the hydrophobic signal sequence of the ribosome-nascent chain (RNC) as it emerges from the ribosomes. The SRP-RNC complex is then targeted to the cytoplasmic membrane where it interacts with the SRP receptor FtsY. Interaction with FtsY leads to the transfer of the RNC complex to the Sec translocase for insertion into the membrane, the hydrolysis of GTP by both Ffh and FtsY, and the dissociation of the SRP-FtsY complex into the individual components. This chain is Signal recognition particle protein, found in Rickettsia felis (strain ATCC VR-1525 / URRWXCal2) (Rickettsia azadi).